The following is a 447-amino-acid chain: Argininosuccinate synthase (447 aa).

Residues 17 to 25 and alanine 43 contribute to the ATP site; that span reads AFSGGLDTS. Tyrosine 99 is a binding site for L-citrulline. ATP contacts are provided by glycine 129 and threonine 131. Residues threonine 131, asparagine 135, and aspartate 136 each coordinate L-aspartate. Asparagine 135 contacts L-citrulline. An ATP-binding site is contributed by aspartate 136. L-citrulline-binding residues include arginine 139 and serine 192. Aspartate 194 contributes to the ATP binding site. Residues threonine 201, glutamate 203, and glutamate 280 each contribute to the L-citrulline site.

Belongs to the argininosuccinate synthase family. Type 2 subfamily. In terms of assembly, homotetramer.

It localises to the cytoplasm. It carries out the reaction L-citrulline + L-aspartate + ATP = 2-(N(omega)-L-arginino)succinate + AMP + diphosphate + H(+). It functions in the pathway amino-acid biosynthesis; L-arginine biosynthesis; L-arginine from L-ornithine and carbamoyl phosphate: step 2/3. This chain is Argininosuccinate synthase, found in Escherichia coli O8 (strain IAI1).